The primary structure comprises 246 residues: Major prion protein (246 aa).

An N-terminal signal peptide occupies residues 1 to 15; the sequence is MLVVFVATWSDLGLC. The tract at residues 16–223 is interaction with GRB2, ERI3 and SYN1; it reads KKRPKPGGWN…ESQAYYQRGS (208 aa). Residues 18–100 are disordered; sequence RPKPGGWNTG…QWHKPSKPKT (83 aa). 5 repeat units span residues 44–52, 53–60, 61–68, 69–76, and 77–84. The tract at residues 44–84 is 5 X 8 AA tandem repeats of P-H-G-G-G-W-G-Q; sequence PQGGGGWGQPHGGGWGQPHGGGWGQPHGGGWGQPHGGGWGQ. Gly residues predominate over residues 45-88; that stretch reads QGGGGWGQPHGGGWGQPHGGGWGQPHGGGWGQPHGGGWGQGGGT. Cu(2+)-binding residues include His54, Gly55, Gly56, His62, Gly63, Gly64, His70, Gly71, Gly72, His78, Gly79, and Gly80. A compositionally biased stretch (basic residues) spans 91 to 100; it reads QWHKPSKPKT. A disulfide bridge links Cys172 with Cys207. 2 N-linked (GlcNAc...) asparagine glycosylation sites follow: Asn174 and Asn190. A lipid anchor (GPI-anchor amidated serine) is attached at Ser223. The propeptide at 224-246 is removed in mature form; the sequence is SMVLFSSPPVILLISFLIFLIVG.

This sequence belongs to the prion family. As to quaternary structure, monomer and homodimer. Has a tendency to aggregate into amyloid fibrils containing a cross-beta spine, formed by a steric zipper of superposed beta-strands. Soluble oligomers may represent an intermediate stage on the path to fibril formation. Copper binding may promote oligomerization. Interacts with GRB2, APP, ERI3/PRNPIP and SYN1. Mislocalized cytosolically exposed PrP interacts with MGRN1; this interaction alters MGRN1 subcellular location and causes lysosomal enlargement. Interacts with KIAA1191.

It localises to the cell membrane. It is found in the golgi apparatus. Functionally, its primary physiological function is unclear. Has cytoprotective activity against internal or environmental stresses. May play a role in neuronal development and synaptic plasticity. May be required for neuronal myelin sheath maintenance. May play a role in iron uptake and iron homeostasis. Soluble oligomers are toxic to cultured neuroblastoma cells and induce apoptosis (in vitro). Association with GPC1 (via its heparan sulfate chains) targets PRNP to lipid rafts. Also provides Cu(2+) or Zn(2+) for the ascorbate-mediated GPC1 deaminase degradation of its heparan sulfate side chains. This chain is Major prion protein (PRNP), found in Erythrocebus patas (Red guenon).